The following is a 584-amino-acid chain: Proteasome-associated ATPase (584 aa).

The stretch at 16–91 forms a coiled coil; the sequence is EELASQVRLL…KEEVDRLAQP (76 aa). Position 273–278 (273–278) interacts with ATP; it reads GCGKTL. The docks into pockets in the proteasome alpha-ring stretch occupies residues 583-584; sequence YL.

It belongs to the AAA ATPase family. As to quaternary structure, homohexamer. Assembles into a hexameric ring structure that caps the 20S proteasome core. Strongly interacts with the prokaryotic ubiquitin-like protein Pup through a hydrophobic interface; the interacting region of ARC lies in its N-terminal coiled-coil domain. There is one Pup binding site per ARC hexamer ring. Upon ATP-binding, the C-terminus of ARC interacts with the alpha-rings of the proteasome core, possibly by binding to the intersubunit pockets.

Its pathway is protein degradation; proteasomal Pup-dependent pathway. Its function is as follows. ATPase which is responsible for recognizing, binding, unfolding and translocation of pupylated proteins into the bacterial 20S proteasome core particle. May be essential for opening the gate of the 20S proteasome via an interaction with its C-terminus, thereby allowing substrate entry and access to the site of proteolysis. Thus, the C-termini of the proteasomal ATPase may function like a 'key in a lock' to induce gate opening and therefore regulate proteolysis. The sequence is that of Proteasome-associated ATPase from Nocardioides sp. (strain ATCC BAA-499 / JS614).